The primary structure comprises 198 residues: Nucleoside triphosphate pyrophosphatase (198 aa).

Residue aspartate 72 is the Proton acceptor of the active site.

The protein belongs to the Maf family. The cofactor is a divalent metal cation.

Its subcellular location is the cytoplasm. The catalysed reaction is a ribonucleoside 5'-triphosphate + H2O = a ribonucleoside 5'-phosphate + diphosphate + H(+). It catalyses the reaction a 2'-deoxyribonucleoside 5'-triphosphate + H2O = a 2'-deoxyribonucleoside 5'-phosphate + diphosphate + H(+). In terms of biological role, nucleoside triphosphate pyrophosphatase. May have a dual role in cell division arrest and in preventing the incorporation of modified nucleotides into cellular nucleic acids. The sequence is that of Nucleoside triphosphate pyrophosphatase from Acinetobacter baylyi (strain ATCC 33305 / BD413 / ADP1).